Reading from the N-terminus, the 197-residue chain is Nucleoside triphosphate pyrophosphatase (197 aa).

D71 (proton acceptor) is an active-site residue.

Belongs to the Maf family. A divalent metal cation is required as a cofactor.

It localises to the cytoplasm. The enzyme catalyses a ribonucleoside 5'-triphosphate + H2O = a ribonucleoside 5'-phosphate + diphosphate + H(+). The catalysed reaction is a 2'-deoxyribonucleoside 5'-triphosphate + H2O = a 2'-deoxyribonucleoside 5'-phosphate + diphosphate + H(+). In terms of biological role, nucleoside triphosphate pyrophosphatase. May have a dual role in cell division arrest and in preventing the incorporation of modified nucleotides into cellular nucleic acids. This is Nucleoside triphosphate pyrophosphatase from Nostoc punctiforme (strain ATCC 29133 / PCC 73102).